A 134-amino-acid polypeptide reads, in one-letter code: uncharacterized protein (134 aa).

It belongs to the ycf68 family.

It is found in the plastid. Its subcellular location is the chloroplast. This is an uncharacterized protein from Saccharum hybrid (Sugarcane).